The sequence spans 509 residues: Glutamyl-tRNA(Gln) amidotransferase subunit B, mitochondrial (509 aa).

The protein belongs to the GatB/GatE family. GatB subfamily. In terms of assembly, subunit of the heterotrimeric GatFAB amidotransferase (AdT) complex, composed of A, B and F subunits.

It localises to the mitochondrion. The enzyme catalyses L-glutamyl-tRNA(Gln) + L-glutamine + ATP + H2O = L-glutaminyl-tRNA(Gln) + L-glutamate + ADP + phosphate + H(+). In terms of biological role, allows the formation of correctly charged Gln-tRNA(Gln) through the transamidation of misacylated Glu-tRNA(Gln) in the mitochondria. The reaction takes place in the presence of glutamine and ATP through an activated gamma-phospho-Glu-tRNA(Gln). In Candida dubliniensis (strain CD36 / ATCC MYA-646 / CBS 7987 / NCPF 3949 / NRRL Y-17841) (Yeast), this protein is Glutamyl-tRNA(Gln) amidotransferase subunit B, mitochondrial.